A 95-amino-acid polypeptide reads, in one-letter code: Cystatin-A2 (95 aa).

A Secondary area of contact motif is present at residues 47 to 51 (QLVNG).

This sequence belongs to the cystatin family.

Its subcellular location is the cytoplasm. Intracellular thiol proteinase inhibitor. Inhibits cathepsin B, but not papain. The chain is Cystatin-A2 (cpiB) from Dictyostelium discoideum (Social amoeba).